Consider the following 154-residue polypeptide: Putative pre-16S rRNA nuclease (154 aa).

The protein belongs to the YqgF nuclease family.

It localises to the cytoplasm. Its function is as follows. Could be a nuclease involved in processing of the 5'-end of pre-16S rRNA. The protein is Putative pre-16S rRNA nuclease of Rickettsia conorii (strain ATCC VR-613 / Malish 7).